The chain runs to 393 residues: Cytochrome b (393 aa).

4 helical membrane-spanning segments follow: residues 33–53, 77–98, 113–133, and 178–198; these read FGSL…FLAM, WFLR…YLHM, WNIG…GYVL, and FFAI…LHLL. Heme b contacts are provided by histidine 83 and histidine 97. Histidine 182 and histidine 196 together coordinate heme b. An a ubiquinone-binding site is contributed by histidine 201. Helical transmembrane passes span 226 to 246, 288 to 308, 320 to 340, and 347 to 367; these read YKDV…ALFA, LGGV…PFIH, LSQL…WIGG, and FIII…ILMP.

The protein belongs to the cytochrome b family. In terms of assembly, the cytochrome bc1 complex contains 3 respiratory subunits (MT-CYB, CYC1 and UQCRFS1), 2 core proteins (UQCRC1 and UQCRC2) and probably 6 low-molecular weight proteins. It depends on heme b as a cofactor.

It is found in the mitochondrion inner membrane. Functionally, component of the ubiquinol-cytochrome c reductase complex (complex III or cytochrome b-c1 complex) that is part of the mitochondrial respiratory chain. The b-c1 complex mediates electron transfer from ubiquinol to cytochrome c. Contributes to the generation of a proton gradient across the mitochondrial membrane that is then used for ATP synthesis. The protein is Cytochrome b (mt-cyb) of Synbranchus marmoratus (Marbled swamp eel).